The sequence spans 174 residues: Transcriptional repressor NrdR (174 aa).

Residues cysteine 3–cysteine 34 fold into a zinc finger. Residues leucine 49–lysine 139 form the ATP-cone domain. The interval glutamate 151–methionine 174 is disordered. Over residues asparagine 155–methionine 174 the composition is skewed to polar residues.

Belongs to the NrdR family. The cofactor is Zn(2+).

Negatively regulates transcription of bacterial ribonucleotide reductase nrd genes and operons by binding to NrdR-boxes. This is Transcriptional repressor NrdR from Chloroflexus aggregans (strain MD-66 / DSM 9485).